The primary structure comprises 606 residues: DNA primase (606 aa).

The CHC2-type zinc finger occupies 40–64; it reads CPFHQEKTPSFYVVPEKRFYFCHGC. The Toprim domain maps to 256-349; it reads KAAVLVEGYF…DPDTFARREG (94 aa). Positions 262, 307, and 309 each coordinate Mg(2+). Residues 429–451 form a disordered region; sequence VPLPKPAGGDAPPSSPNRPAPPL. Over residues 441–451 the composition is skewed to pro residues; it reads PSSPNRPAPPL.

This sequence belongs to the DnaG primase family. As to quaternary structure, monomer. Interacts with DnaB. The cofactor is Zn(2+). Mg(2+) serves as cofactor.

It catalyses the reaction ssDNA + n NTP = ssDNA/pppN(pN)n-1 hybrid + (n-1) diphosphate.. Its function is as follows. RNA polymerase that catalyzes the synthesis of short RNA molecules used as primers for DNA polymerase during DNA replication. The polypeptide is DNA primase (Myxococcus xanthus).